Reading from the N-terminus, the 481-residue chain is Putative cytochrome P450 520B1 (481 aa).

Heme is bound at residue cysteine 427.

Belongs to the cytochrome P450 family. Requires heme as cofactor.

The protein is Putative cytochrome P450 520B1 (cyp520B1) of Dictyostelium discoideum (Social amoeba).